Consider the following 332-residue polypeptide: Small ribosomal subunit biogenesis GTPase RsgA (332 aa).

The 157-residue stretch at 103–259 (RQQLIAANLD…LIDTPGMREL (157 aa)) folds into the CP-type G domain. GTP contacts are provided by residues 148–151 (TKVD) and 201–209 (GSSGAGKST). Cysteine 281, cysteine 286, histidine 288, and cysteine 294 together coordinate Zn(2+).

Belongs to the TRAFAC class YlqF/YawG GTPase family. RsgA subfamily. As to quaternary structure, monomer. Associates with 30S ribosomal subunit, binds 16S rRNA. It depends on Zn(2+) as a cofactor.

It is found in the cytoplasm. In terms of biological role, one of several proteins that assist in the late maturation steps of the functional core of the 30S ribosomal subunit. Helps release RbfA from mature subunits. May play a role in the assembly of ribosomal proteins into the subunit. Circularly permuted GTPase that catalyzes slow GTP hydrolysis, GTPase activity is stimulated by the 30S ribosomal subunit. This Xylella fastidiosa (strain M23) protein is Small ribosomal subunit biogenesis GTPase RsgA.